A 587-amino-acid polypeptide reads, in one-letter code: Phosphatidate phosphatase APP1 (587 aa).

Disordered regions lie at residues 1-28 (MNSQGYDESSSSTAATSGPTSGDPRMGK) and 150-178 (PPHLEEDSGDLNDSQSSIESSLSSKSENR). Composition is skewed to low complexity over residues 9-22 (SSSSTAATSGPTSG) and 163-174 (SQSSIESSLSSK). Residues 281 to 285 (DIDDT) carry the DXDXT motif motif. The interval 452 to 521 (QQRPMQMTKS…NRQLPNLDAN (70 aa)) is disordered. Residues 467–483 (RRPPPPPIPSTQKPSLT) form an interaction with SH3 domain of ABP1 region.

Monomer. Interacts with ABP1. It depends on Mg(2+) as a cofactor. Post-translationally, N-glycosylated.

Its subcellular location is the cytoplasm. The protein resides in the cytoskeleton. The protein localises to the actin patch. The enzyme catalyses a 1,2-diacyl-sn-glycero-3-phosphate + H2O = a 1,2-diacyl-sn-glycerol + phosphate. It catalyses the reaction 1,2-di-(9Z-octadecenoyl)-sn-glycero-3-phosphate + H2O = 1,2-di-(9Z-octadecenoyl)-sn-glycerol + phosphate. Inhibited by N-ethylmaleimide. Mg(2+)-dependent phosphatidate (PA) phosphatase which catalyzes the dephosphorylation of PA to yield diacylglycerol. May play a role in vesicular trafficking through its PAP activity at cortical actin patches. Can also utilize diacylglycerol pyrophosphate and lyso-PA as substrates with specificity constants 4- and 7-fold lower, respectively, when compared with PA. This Saccharomyces cerevisiae (strain ATCC 204508 / S288c) (Baker's yeast) protein is Phosphatidate phosphatase APP1 (APP1).